The primary structure comprises 172 residues: Ribosome maturation factor RimM (172 aa).

The PRC barrel domain maps to 96–168 (EGEFYYHQII…RVDVELMEGL (73 aa)).

It belongs to the RimM family. In terms of assembly, binds ribosomal protein uS19.

It localises to the cytoplasm. In terms of biological role, an accessory protein needed during the final step in the assembly of 30S ribosomal subunit, possibly for assembly of the head region. Essential for efficient processing of 16S rRNA. May be needed both before and after RbfA during the maturation of 16S rRNA. It has affinity for free ribosomal 30S subunits but not for 70S ribosomes. The polypeptide is Ribosome maturation factor RimM (Streptococcus pyogenes serotype M1).